Consider the following 429-residue polypeptide: Enolase (429 aa).

Position 168 (Gln-168) interacts with (2R)-2-phosphoglycerate. Catalysis depends on Glu-210, which acts as the Proton donor. Positions 247, 288, and 315 each coordinate Mg(2+). Lys-340, Arg-369, Ser-370, and Lys-391 together coordinate (2R)-2-phosphoglycerate. Lys-340 (proton acceptor) is an active-site residue.

Belongs to the enolase family. The cofactor is Mg(2+).

The protein resides in the cytoplasm. The protein localises to the secreted. It localises to the cell surface. It carries out the reaction (2R)-2-phosphoglycerate = phosphoenolpyruvate + H2O. Its pathway is carbohydrate degradation; glycolysis; pyruvate from D-glyceraldehyde 3-phosphate: step 4/5. Catalyzes the reversible conversion of 2-phosphoglycerate (2-PG) into phosphoenolpyruvate (PEP). It is essential for the degradation of carbohydrates via glycolysis. The sequence is that of Enolase from Trichormus variabilis (strain ATCC 29413 / PCC 7937) (Anabaena variabilis).